We begin with the raw amino-acid sequence, 413 residues long: PCI domain-containing protein 2 homolog (413 aa).

In terms of domain architecture, PCI spans 222–403 (VAYNYFLGRK…QKLVISKMNA (182 aa)).

This sequence belongs to the CSN12 family.

In Caenorhabditis elegans, this protein is PCI domain-containing protein 2 homolog.